Here is a 215-residue protein sequence, read N- to C-terminus: Protein GET1 (215 aa).

The Lumenal portion of the chain corresponds to 1 to 4 (MPSL). The helical transmembrane segment at 5 to 24 (LILIFTIEVAVELINTIGAA) threads the bilayer. At 25-110 (TINNLLWRIF…NFDKYITGIR (86 aa)) the chain is on the cytoplasmic side. A coiled-coil region spans residues 72-104 (AKWAKLRRQHDKLLEQLEKKKAALDSTKGNFDK). Residues 111 to 131 (WVGTQGLRYFLPFWYAKVPMF) form a helical membrane-spanning segment. Residues 132–155 (WLPYGWFPYYAEWLVSFPRAPMGS) are Lumenal-facing. Residues 156–172 (VSIASWQLACTGFVVLI) traverse the membrane as a helical segment. Residues 173 to 215 (KDAITALVVFVMGMRQSNVKQAVPVKAVSGEKASDEKEGKKEL) are Cytoplasmic-facing.

This sequence belongs to the WRB/GET1 family. Interacts with GET3.

The protein localises to the endoplasmic reticulum membrane. Required for the post-translational delivery of tail-anchored (TA) proteins to the endoplasmic reticulum. Acts as a membrane receptor for soluble GET3, which recognizes and selectively binds the transmembrane domain of TA proteins in the cytosol. This is Protein GET1 from Pyricularia oryzae (strain 70-15 / ATCC MYA-4617 / FGSC 8958) (Rice blast fungus).